The sequence spans 1016 residues: MAETESGTGNSPSHRLSETSNASGNRSHQQSKQIASYKSSKPNVFIRFIRAIFGYRKTSVTLFVFITIIATLILVELSNSLDFSVKLPTNNLERTILDNSWLDLQKIGKEEHPYTSKGNDYVHDYLEAKITELIGKSLFIECDNDVNYTNNIIFKTENDLYNQVTYYESNNLLVRINGSDSSLPALLVSAHFDSVPSSFGVTDDGMGIASLLGILNYYSSDGIDQPMRTIILNFNNNEEFGLMGATSFLHHPWFKQVRYFLNLEGTGAGGKAVLFRGTDYGIVKYFKHVRYPFGTSLFQQGFNNHLIHSETDYKIYKENGGIRGIDLAFYKPRDIYHTASDSIKNIDIKSLWHMLSNSLDFVEIVSSQRIDLDDEDTSPESDEKSREFAIFSSFFNWFFVIPASQLVLINVTCLAVIPLISLPLLVIIFNYKKNWHIGFINAIKFPVSLVLSICILNIITHNVIASINEFLPNSSYDSIVSTLYSLFLLLNYLFLNGINFIFKGYKGLYHDEKLILIIQTSFIYWVLLIVSTNKLSKNKIGNDHTGEFPLIMLFLLQSIGALFGLFSWSFKKTTPDELRNNDDEACQALLSREEHNNYGSNEAELESGEPISSNSSVSLNSSSSQVTNNLVKNLRKSFSYDWSIQYVVIVPLSSLIVYNTGSLLLSGLNKSIQESLNAEKLIFDLIQLVAVTLAIPFLPFIFKINRLLVTALVLVFCSGFISIFLKSPFDQLNPLKLRFVQSINLDESSDISVVNVFGRYGSPMNNVLLDLPSLKETNESLECNNLQDGMQLCSYKTLLSPNLSPDVTDFNDYLDVQVLKNSSSDYPYGLLSGEIKINVPENRVCRLSFNNSNFENSKQSLVRTILVYEDNNYENSSNKLFPFEVSEFQLANLPEGFSRDKKGTYIYKNLNGIDKLELNKLSWDKPYHVGFQWMPKFVDSVSAENENTNVPYTTDFNNLGIQVECFWGNLGYANNENKSEDERIPAYGEVLHYSPNYVSWANKESGLVSVSKYVEI.

The tract at residues 1 to 36 (MAETESGTGNSPSHRLSETSNASGNRSHQQSKQIAS) is disordered. The Cytoplasmic segment spans residues 1–57 (MAETESGTGNSPSHRLSETSNASGNRSHQQSKQIASYKSSKPNVFIRFIRAIFGYRK). A helical transmembrane segment spans residues 58 to 78 (TSVTLFVFITIIATLILVELS). The Vacuolar segment spans residues 79 to 408 (NSLDFSVKLP…FVIPASQLVL (330 aa)). N-linked (GlcNAc...) asparagine glycans are attached at residues Asn147 and Asn177. Residues His191 and Asp203 each contribute to the Zn(2+) site. The active-site Proton acceptor is Glu238. Residues Glu239, Glu264, and His337 each contribute to the Zn(2+) site. The helical transmembrane segment at 409-429 (INVTCLAVIPLISLPLLVIIF) threads the bilayer. Residues 430–438 (NYKKNWHIG) lie on the Cytoplasmic side of the membrane. Residues 439 to 459 (FINAIKFPVSLVLSICILNII) form a helical membrane-spanning segment. Over 460-481 (THNVIASINEFLPNSSYDSIVS) the chain is Vacuolar. The N-linked (GlcNAc...) asparagine glycan is linked to Asn473. A helical membrane pass occupies residues 482 to 502 (TLYSLFLLLNYLFLNGINFIF). Over 503-511 (KGYKGLYHD) the chain is Cytoplasmic. Residues 512–532 (EKLILIIQTSFIYWVLLIVST) form a helical membrane-spanning segment. Topologically, residues 533–547 (NKLSKNKIGNDHTGE) are vacuolar. A helical membrane pass occupies residues 548-568 (FPLIMLFLLQSIGALFGLFSW). Residues 569–646 (SFKKTTPDEL…SFSYDWSIQY (78 aa)) are Cytoplasmic-facing. Residues 598–622 (YGSNEAELESGEPISSNSSVSLNSS) are disordered. Over residues 612-622 (SSNSSVSLNSS) the composition is skewed to low complexity. Residues 647-667 (VVIVPLSSLIVYNTGSLLLSG) form a helical membrane-spanning segment. Residues 668–681 (LNKSIQESLNAEKL) lie on the Vacuolar side of the membrane. Asn669 carries an N-linked (GlcNAc...) asparagine glycan. A helical membrane pass occupies residues 682–702 (IFDLIQLVAVTLAIPFLPFIF). The Cytoplasmic segment spans residues 703–706 (KINR). A helical transmembrane segment spans residues 707 to 727 (LLVTALVLVFCSGFISIFLKS). Over 728–1016 (PFDQLNPLKL…LVSVSKYVEI (289 aa)) the chain is Vacuolar. N-linked (GlcNAc...) asparagine glycosylation is found at Asn778, Asn821, Asn850, Asn875, and Asn977.

The protein belongs to the peptidase M28 family. It depends on Zn(2+) as a cofactor.

It localises to the vacuole membrane. In terms of biological role, may be involved in vacuolar sorting and osmoregulation. In Debaryomyces hansenii (strain ATCC 36239 / CBS 767 / BCRC 21394 / JCM 1990 / NBRC 0083 / IGC 2968) (Yeast), this protein is Vacuolar membrane protease.